Consider the following 1756-residue polypeptide: Transposon Ty1-BR Gag-Pol polyprotein (1756 aa).

Composition is skewed to polar residues over residues 1 to 10 (MESQQLSNYP), 48 to 60 (TKAN…TPAS), and 127 to 152 (QSQF…GNTF). Disordered regions lie at residues 1-93 (MESQ…MMTQ), 126-173 (PQSQ…RPPP), and 352-421 (GSRN…SKST). Positions 153–165 (TDSSSADSDMTST) are enriched in low complexity. An RNA-binding region spans residues 299 to 401 (NNGIHINNKV…NSKSKTARAH (103 aa)). Residues 402–418 (NVSTSNNSPSTDNDSIS) show a composition bias toward low complexity. Phosphoserine is present on serine 416. Residue aspartate 461 is the For protease activity; shared with dimeric partner of the active site. An integrase-type zinc finger-like region spans residues 583 to 640 (NVHTSESTRKYPYPFIHRMLAHANAQTIRYSLKNNTITYFNESDVDWSSAIDYQCPDC). An Integrase catalytic domain is found at 660–835 (NSYEPFQYLH…AGLDISTLLP (176 aa)). Mg(2+)-binding residues include aspartate 671 and aspartate 736. Disordered regions lie at residues 956–1088 (SKAV…TEKR) and 1142–1173 (PTEL…SNAY). Residues 960–969 (SPTDSTPPST) are compositionally biased toward low complexity. Polar residues-rich tracts occupy residues 1005–1017 (STPQ…STDS) and 1031–1043 (MSQS…SYAS). A compositionally biased stretch (basic and acidic residues) spans 1044–1053 (KSKDFRHSDS). Polar residues predominate over residues 1054–1082 (YSDNETNHTNVPISSTGGTNNKTVPQTSE). The Bipartite nuclear localization signal motif lies at 1179-1213 (KKRSLEDNETEIKVSRDTWNTKNMRSLEPPRSKKR). The 139-residue stretch at 1339–1477 (NNYYITQLDI…DILGLEIKYQ (139 aa)) folds into the Reverse transcriptase Ty1/copia-type domain. 6 residues coordinate Mg(2+): aspartate 1347, aspartate 1428, aspartate 1429, aspartate 1611, glutamate 1653, and aspartate 1686. Residues 1611 to 1753 (DASYGNQPYY…IKTFKLLTNK (143 aa)) enclose the RNase H Ty1/copia-type domain.

As to quaternary structure, the capsid protein forms a homotrimer, from which the VLPs are assembled. The protease is a homodimer, whose active site consists of two apposed aspartic acid residues. Post-translationally, initially, virus-like particles (VLPs) are composed of the structural unprocessed proteins Gag and Gag-Pol, and also contain the host initiator methionine tRNA (tRNA(i)-Met) which serves as a primer for minus-strand DNA synthesis, and a dimer of genomic Ty RNA. Processing of the polyproteins occurs within the particle and proceeds by an ordered pathway, called maturation. First, the protease (PR) is released by autocatalytic cleavage of the Gag-Pol polyprotein yielding capsid protein p45 and a Pol-p154 precursor protein. This cleavage is a prerequisite for subsequent processing of Pol-p154 at the remaining sites to release the mature structural and catalytic proteins. Maturation takes place prior to the RT reaction and is required to produce transposition-competent VLPs.

The protein resides in the cytoplasm. It is found in the nucleus. It catalyses the reaction DNA(n) + a 2'-deoxyribonucleoside 5'-triphosphate = DNA(n+1) + diphosphate. The catalysed reaction is Endonucleolytic cleavage to 5'-phosphomonoester.. Capsid protein (CA) is the structural component of the virus-like particle (VLP), forming the shell that encapsulates the retrotransposons dimeric RNA genome. The particles are assembled from trimer-clustered units and there are holes in the capsid shells that allow for the diffusion of macromolecules. CA also has nucleocapsid-like chaperone activity, promoting primer tRNA(i)-Met annealing to the multipartite primer-binding site (PBS), dimerization of Ty1 RNA and initiation of reverse transcription. Functionally, the aspartyl protease (PR) mediates the proteolytic cleavages of the Gag and Gag-Pol polyproteins after assembly of the VLP. Its function is as follows. Reverse transcriptase/ribonuclease H (RT) is a multifunctional enzyme that catalyzes the conversion of the retro-elements RNA genome into dsDNA within the VLP. The enzyme displays a DNA polymerase activity that can copy either DNA or RNA templates, and a ribonuclease H (RNase H) activity that cleaves the RNA strand of RNA-DNA heteroduplexes during plus-strand synthesis and hydrolyzes RNA primers. The conversion leads to a linear dsDNA copy of the retrotransposon that includes long terminal repeats (LTRs) at both ends. In terms of biological role, integrase (IN) targets the VLP to the nucleus, where a subparticle preintegration complex (PIC) containing at least integrase and the newly synthesized dsDNA copy of the retrotransposon must transit the nuclear membrane. Once in the nucleus, integrase performs the integration of the dsDNA into the host genome. In Saccharomyces cerevisiae (strain ATCC 204508 / S288c) (Baker's yeast), this protein is Transposon Ty1-BR Gag-Pol polyprotein (TY1B-BR).